A 136-amino-acid chain; its full sequence is Thiosulfate sulfurtransferase 18 (136 aa).

Residues 26-128 (LQSGHQYLDV…WVDHSFPINT (103 aa)) enclose the Rhodanese domain. The active-site Cysteine persulfide intermediate is the C88.

It localises to the cytoplasm. It catalyses the reaction thiosulfate + hydrogen cyanide = thiocyanate + sulfite + 2 H(+). Catalyzes the transfer of a sulfur ion from a donor to cyanide or to other thiol compounds. Substrate preference is thiosulfate &gt; 3-mercaptopyruvate. The polypeptide is Thiosulfate sulfurtransferase 18 (STR18) (Arabidopsis thaliana (Mouse-ear cress)).